A 156-amino-acid polypeptide reads, in one-letter code: VapC ribonuclease AF_1683 (156 aa).

In terms of domain architecture, PINc spans 4–125; it reads LIDTGIFFGF…KLISYDSRFS (122 aa). Asp6 and Asp103 together coordinate Mg(2+).

It belongs to the PINc/VapC protein family. Mg(2+) serves as cofactor.

Toxic component of a type II toxin-antitoxin (TA) system. An RNase. The chain is VapC ribonuclease AF_1683 from Archaeoglobus fulgidus (strain ATCC 49558 / DSM 4304 / JCM 9628 / NBRC 100126 / VC-16).